We begin with the raw amino-acid sequence, 78 residues long: Consomatin Te1 (78 aa).

A signal peptide spans methionine 1 to glycine 22. Residues glycine 23–arginine 56 constitute a propeptide that is removed on maturation. Cysteine 63 and cysteine 68 form a disulfide bridge. A D-tryptophan modification is found at tryptophan 65. 4-hydroxyproline is present on residues proline 69, proline 70, and proline 72. The propeptide occupies arginine 74 to serine 78.

Belongs to the conotoxin C superfamily. Consomatin family. In terms of tissue distribution, expressed by the venom duct.

It is found in the secreted. In terms of biological role, moderately activates human somatostatin receptors (SSTR) with a preferential activation of SSTR1 and SSTR4. In vivo, does not cause behavioral changes in mice within a few minutes of intracranial injection, but causes a progressive loss of movement thereafter. Four to five hours after injection, mice recover, even with the highest dose tested. Shows antinociception and antihyperalgesia activities in two mouse models of acute pain, most probably by acting outside the central nervous system. This Conus terebra (Sea snail) protein is Consomatin Te1.